The following is a 266-amino-acid chain: Non-structural maintenance of chromosomes element 1 homolog (266 aa).

The interaction with NSMCE3 stretch occupies residues 1 to 102; sequence MQGSTRRAGA…SVSKMATDFA (102 aa). The RING-type; atypical zinc finger occupies 191–232; it reads CNICHGLLIQGQSCETCGIRMHLPCVAKYFQSIPEPHCPHCN. The tract at residues 246–266 is disordered; that stretch reads EKEREAGISKSSRKSLRTRQH. Residues 256 to 266 show a composition bias toward basic residues; the sequence is SSRKSLRTRQH.

It belongs to the NSE1 family. In terms of assembly, component of the SMC5-SMC6 complex which consists at least of SMC5, SMC6, NSMCE2, NSMCE1, NSMCE4A or EID3 and NSMCE3. NSMCE1, NSMCE4A or EID3 and NSMCE3 probably form a subcomplex that bridges the head domains of the SMC5-SMC6 heterodimer. Interacts with NSMCE3. Ubiquitinated.

The protein localises to the nucleus. It localises to the chromosome. The protein resides in the telomere. The enzyme catalyses S-ubiquitinyl-[E2 ubiquitin-conjugating enzyme]-L-cysteine + [acceptor protein]-L-lysine = [E2 ubiquitin-conjugating enzyme]-L-cysteine + N(6)-ubiquitinyl-[acceptor protein]-L-lysine.. Its function is as follows. RING-type zinc finger-containing E3 ubiquitin ligase that assembles with melanoma antigen protein (MAGE) to catalyze the direct transfer of ubiquitin from E2 ubiquitin-conjugating enzyme to a specific substrate. Within MAGE-RING ubiquitin ligase complex, MAGE stimulates and specifies ubiquitin ligase activity likely through recruitment and/or stabilization of the E2 ubiquitin-conjugating enzyme at the E3:substrate complex. Involved in maintenance of genome integrity, DNA damage response and DNA repair. NSMCE3/MAGEG1 and NSMCE1 ubiquitin ligase are components of SMC5-SMC6 complex and may positively regulate homologous recombination-mediated DNA repair. In Mus musculus (Mouse), this protein is Non-structural maintenance of chromosomes element 1 homolog (Nsmce1).